The chain runs to 508 residues: Photosystem II CP47 reaction center protein (508 aa).

6 helical membrane passes run 21–36 (SVHIMHTALVAGWAGS), 101–115 (IVFSGLCFLAAIWHW), 140–156 (GIHLFLSGLACFGFGAF), 203–218 (IAAGTLGILAGLFHLS), 237–252 (VLSSSIAAVFFAAFVV), and 457–472 (SFALLFFFGHIWHGAR).

The protein belongs to the PsbB/PsbC family. PsbB subfamily. PSII is composed of 1 copy each of membrane proteins PsbA, PsbB, PsbC, PsbD, PsbE, PsbF, PsbH, PsbI, PsbJ, PsbK, PsbL, PsbM, PsbT, PsbX, PsbY, PsbZ, Psb30/Ycf12, at least 3 peripheral proteins of the oxygen-evolving complex and a large number of cofactors. It forms dimeric complexes. It depends on Binds multiple chlorophylls. PSII binds additional chlorophylls, carotenoids and specific lipids. as a cofactor.

The protein localises to the plastid. It localises to the chloroplast thylakoid membrane. One of the components of the core complex of photosystem II (PSII). It binds chlorophyll and helps catalyze the primary light-induced photochemical processes of PSII. PSII is a light-driven water:plastoquinone oxidoreductase, using light energy to abstract electrons from H(2)O, generating O(2) and a proton gradient subsequently used for ATP formation. This Ipomoea purpurea (Common morning glory) protein is Photosystem II CP47 reaction center protein.